A 362-amino-acid polypeptide reads, in one-letter code: Cytoskeleton protein RodZ (362 aa).

Residues 1–111 (MNTEASQDQT…LGKKHKKRDG (111 aa)) are Cytoplasmic-facing. The region spanning 19 to 79 (LRQARESLGL…KLVHLPEDEL (61 aa)) is the HTH cro/C1-type domain. Residues 30–49 (QQTVAERLCLKVSTIRDIEE) constitute a DNA-binding region (H-T-H motif). A helical; Signal-anchor for type II membrane protein membrane pass occupies residues 112–132 (WLMSFTWLIVLVVLGLTGAWW). The Periplasmic portion of the chain corresponds to 133–362 (WQNHQAQQAE…RVARLTVGVE (230 aa)). Residues 151–277 (SAQLSQNGGQ…LPTADAGVSG (127 aa)) form a disordered region. Residues 193 to 221 (STSAVTNSATTSSATTSSVPTTSSVPKTT) show a composition bias toward low complexity. The segment covering 223 to 242 (VPKTNSTEPVDTANTNTTMH) has biased composition (polar residues). A compositionally biased stretch (low complexity) spans 246–259 (AASAAVSPSQVPQP).

It belongs to the RodZ family.

The protein localises to the cell inner membrane. Cytoskeletal protein that is involved in cell-shape control through regulation of the length of the long axis. The chain is Cytoskeleton protein RodZ from Yersinia pseudotuberculosis serotype IB (strain PB1/+).